The chain runs to 188 residues: Putative manganese efflux pump MntP (188 aa).

Helical transmembrane passes span 8-28 (CLGL…GFVI), 39-59 (IALF…LTGL), 68-88 (IDHW…IYEA), 106-126 (LLAL…GLSL), 131-151 (ILLP…IGVF), and 164-184 (IEII…IEDL).

Belongs to the MntP (TC 9.B.29) family.

The protein localises to the cell inner membrane. Functionally, probably functions as a manganese efflux pump. This chain is Putative manganese efflux pump MntP, found in Crocosphaera subtropica (strain ATCC 51142 / BH68) (Cyanothece sp. (strain ATCC 51142)).